The chain runs to 149 residues: MRYNEKELQALSRQPAEMAAELGMRGPKKGSVLKRRLVKLVVNFLFYFRTDEAEPVGALLLERCRVVREEPGTFSISFIEDPERKYHFECSSEEQCQEWMEALRRASYEFMRRSLIFYRNEIRKVTGKDPLEQFGISEEARFQLSGLQA.

One can recognise a PH domain in the interval 15–108 (PAEMAAELGM…WMEALRRASY (94 aa)).

In terms of tissue distribution, expressed in testis and liver.

This Homo sapiens (Human) protein is Pleckstrin homology domain-containing family J member 1 (PLEKHJ1).